A 187-amino-acid polypeptide reads, in one-letter code: ATP synthase subunit b (187 aa).

The helical transmembrane segment at 31 to 51 (VAIMGLAIFVLFLILSYLLFN) threads the bilayer.

It belongs to the ATPase B chain family. As to quaternary structure, F-type ATPases have 2 components, F(1) - the catalytic core - and F(0) - the membrane proton channel. F(1) has five subunits: alpha(3), beta(3), gamma(1), delta(1), epsilon(1). F(0) has three main subunits: a(1), b(2) and c(10-14). The alpha and beta chains form an alternating ring which encloses part of the gamma chain. F(1) is attached to F(0) by a central stalk formed by the gamma and epsilon chains, while a peripheral stalk is formed by the delta and b chains.

It localises to the cell membrane. Its function is as follows. F(1)F(0) ATP synthase produces ATP from ADP in the presence of a proton or sodium gradient. F-type ATPases consist of two structural domains, F(1) containing the extramembraneous catalytic core and F(0) containing the membrane proton channel, linked together by a central stalk and a peripheral stalk. During catalysis, ATP synthesis in the catalytic domain of F(1) is coupled via a rotary mechanism of the central stalk subunits to proton translocation. Component of the F(0) channel, it forms part of the peripheral stalk, linking F(1) to F(0). The polypeptide is ATP synthase subunit b (Lachnoclostridium phytofermentans (strain ATCC 700394 / DSM 18823 / ISDg) (Clostridium phytofermentans)).